Consider the following 192-residue polypeptide: Phosphoheptose isomerase (192 aa).

In terms of domain architecture, SIS spans 35–192 (LIETLENQGK…CIERHFANKN (158 aa)). A substrate-binding site is contributed by 50 to 52 (NGG). Positions 59 and 63 each coordinate Zn(2+). Substrate-binding positions include Glu63, 92–93 (ND), 118–120 (STS), Ser123, and Gln170. Residues Gln170 and His178 each coordinate Zn(2+).

It belongs to the SIS family. GmhA subfamily. In terms of assembly, homotetramer. Requires Zn(2+) as cofactor.

It is found in the cytoplasm. It carries out the reaction 2 D-sedoheptulose 7-phosphate = D-glycero-alpha-D-manno-heptose 7-phosphate + D-glycero-beta-D-manno-heptose 7-phosphate. The protein operates within carbohydrate biosynthesis; D-glycero-D-manno-heptose 7-phosphate biosynthesis; D-glycero-alpha-D-manno-heptose 7-phosphate and D-glycero-beta-D-manno-heptose 7-phosphate from sedoheptulose 7-phosphate: step 1/1. Its function is as follows. Catalyzes the isomerization of sedoheptulose 7-phosphate in D-glycero-D-manno-heptose 7-phosphate. This chain is Phosphoheptose isomerase, found in Helicobacter pylori (strain Shi470).